The sequence spans 521 residues: Medium/long-chain-fatty-acid--[acyl-carrier-protein] ligase MbtM (521 aa).

It belongs to the ATP-dependent AMP-binding enzyme family.

The catalysed reaction is a long-chain fatty acid + holo-[ACP] + ATP = a long-chain fatty acyl-[ACP] + AMP + diphosphate. The enzyme catalyses a medium-chain fatty acid + holo-[ACP] + ATP = a medium-chain fatty acyl-[ACP] + AMP + diphosphate. The protein operates within siderophore biosynthesis; mycobactin biosynthesis. Activates lipidic moieties required for mycobactin biosynthesis. Converts medium- to long-chain aliphatic fatty acids into acyl adenylate, which is further transferred on to the phosphopantetheine arm of the carrier protein MbtL. The protein is Medium/long-chain-fatty-acid--[acyl-carrier-protein] ligase MbtM (mbtM) of Mycobacterium tuberculosis (strain CDC 1551 / Oshkosh).